We begin with the raw amino-acid sequence, 839 residues long: LPS-assembly protein LptD (839 aa).

Residues 1–21 form the signal peptide; the sequence is MAIGITACVLSLINYQGLAYS.

Belongs to the LptD family. In terms of assembly, component of the lipopolysaccharide transport and assembly complex. Interacts with LptE and LptA.

It is found in the cell outer membrane. Its function is as follows. Together with LptE, is involved in the assembly of lipopolysaccharide (LPS) at the surface of the outer membrane. The protein is LPS-assembly protein LptD of Legionella pneumophila (strain Paris).